Consider the following 500-residue polypeptide: Cytochrome c-552 (500 aa).

The signal sequence occupies residues Met-1–Ala-24. Positions 102, 130, 133, 134, 168, 171, 172, 217, 220, and 221 each coordinate heme c. Glu-223, Tyr-224, Lys-268, and Gln-270 together coordinate Ca(2+). Tyr-224 contacts substrate. A substrate-binding site is contributed by His-271. The heme c site is built by His-282, Cys-289, Cys-292, His-293, His-308, Cys-321, Cys-324, His-325, and His-400. Positions Ala-477–Lys-500 are disordered.

The protein belongs to the cytochrome c-552 family. Ca(2+) serves as cofactor. Heme c is required as a cofactor.

The protein resides in the periplasm. It catalyses the reaction 6 Fe(III)-[cytochrome c] + NH4(+) + 2 H2O = 6 Fe(II)-[cytochrome c] + nitrite + 8 H(+). Its pathway is nitrogen metabolism; nitrate reduction (assimilation). Its function is as follows. Catalyzes the reduction of nitrite to ammonia, consuming six electrons in the process. The chain is Cytochrome c-552 from Mannheimia haemolytica (Pasteurella haemolytica).